Reading from the N-terminus, the 326-residue chain is Alkanal monooxygenase beta chain (326 aa).

The protein belongs to the bacterial luciferase oxidoreductase family. In terms of assembly, heterodimer of an alpha and a beta chain.

It catalyses the reaction a long-chain fatty aldehyde + FMNH2 + O2 = a long-chain fatty acid + hnu + FMN + H2O + 2 H(+). Light-emitting reaction in luminous bacteria. The specific role of the beta subunit is unknown, but it is absolutely required for bioluminescence activity. The polypeptide is Alkanal monooxygenase beta chain (luxB) (Photobacterium leiognathi).